We begin with the raw amino-acid sequence, 312 residues long: tRNA dimethylallyltransferase (312 aa).

11 to 18 contacts ATP; sequence GLTATGKT. 13-18 contributes to the substrate binding site; that stretch reads TATGKT. Residues 36-39 are interaction with substrate tRNA; the sequence is DSMC.

The protein belongs to the IPP transferase family. In terms of assembly, monomer. Mg(2+) serves as cofactor.

The enzyme catalyses adenosine(37) in tRNA + dimethylallyl diphosphate = N(6)-dimethylallyladenosine(37) in tRNA + diphosphate. Catalyzes the transfer of a dimethylallyl group onto the adenine at position 37 in tRNAs that read codons beginning with uridine, leading to the formation of N6-(dimethylallyl)adenosine (i(6)A). This is tRNA dimethylallyltransferase from Caldicellulosiruptor saccharolyticus (strain ATCC 43494 / DSM 8903 / Tp8T 6331).